The primary structure comprises 225 residues: Mitochondrial inner membrane protease ATP23 (225 aa).

H124 contacts a divalent metal cation. E125 is a catalytic residue. A divalent metal cation is bound at residue H128.

This sequence belongs to the peptidase M76 family.

It is found in the mitochondrion inner membrane. Functionally, has a dual role in the assembly of mitochondrial ATPase. Acts as a protease that removes N-terminal residues of mitochondrial ATPase CF(0) subunit 6 at the intermembrane space side. Also involved in the correct assembly of the membrane-embedded ATPase CF(0) particle, probably mediating association of subunit 6 with the subunit 9 ring. In Candida glabrata (strain ATCC 2001 / BCRC 20586 / JCM 3761 / NBRC 0622 / NRRL Y-65 / CBS 138) (Yeast), this protein is Mitochondrial inner membrane protease ATP23 (ATP23).